A 300-amino-acid chain; its full sequence is GTPase Era (300 aa).

The Era-type G domain occupies 8–176 (RCGYVAIVGR…EAQIAKHLPE (169 aa)). A G1 region spans residues 16–23 (GRPNVGKS). 16–23 (GRPNVGKS) contacts GTP. Residues 42 to 46 (QTTRH) are G2. The interval 63 to 66 (DTPG) is G3. Residues 63–67 (DTPGM) and 125–128 (NKTD) each bind GTP. The interval 125-128 (NKTD) is G4. The G5 stretch occupies residues 155–157 (ISA). The 85-residue stretch at 199-283 (VREKIMRQLG…MLNLWVKVKG (85 aa)) folds into the KH type-2 domain.

Belongs to the TRAFAC class TrmE-Era-EngA-EngB-Septin-like GTPase superfamily. Era GTPase family. Monomer.

It localises to the cytoplasm. The protein localises to the cell inner membrane. In terms of biological role, an essential GTPase that binds both GDP and GTP, with rapid nucleotide exchange. Plays a role in 16S rRNA processing and 30S ribosomal subunit biogenesis and possibly also in cell cycle regulation and energy metabolism. The chain is GTPase Era from Pseudomonas putida (strain ATCC 700007 / DSM 6899 / JCM 31910 / BCRC 17059 / LMG 24140 / F1).